Consider the following 251-residue polypeptide: Hydroxyacylglutathione hydrolase (251 aa).

Positions 53, 55, 57, 58, 110, 127, and 165 each coordinate Zn(2+).

Belongs to the metallo-beta-lactamase superfamily. Glyoxalase II family. As to quaternary structure, monomer. The cofactor is Zn(2+).

It catalyses the reaction an S-(2-hydroxyacyl)glutathione + H2O = a 2-hydroxy carboxylate + glutathione + H(+). It participates in secondary metabolite metabolism; methylglyoxal degradation; (R)-lactate from methylglyoxal: step 2/2. Functionally, thiolesterase that catalyzes the hydrolysis of S-D-lactoyl-glutathione to form glutathione and D-lactic acid. The polypeptide is Hydroxyacylglutathione hydrolase (Salmonella arizonae (strain ATCC BAA-731 / CDC346-86 / RSK2980)).